The chain runs to 214 residues: CASP-like protein 0U1 (214 aa).

Topologically, residues 1 to 82 (MATSEAPLLK…GFTSFYQFKG (82 aa)) are cytoplasmic. A helical membrane pass occupies residues 83–103 (VVGVYAAFWVYTVLLIGLYLF). Over 104–112 (SRGPPPGTE) the chain is Extracellular. Residues 113–133 (FVVHALFTLCMIAFVSLSVIS) form a helical membrane-spanning segment. Over 134 to 153 (CTSTVIESDYSVCKNAAYAK) the chain is Cytoplasmic. A helical membrane pass occupies residues 154 to 174 (ASLVFAALVVVLNCATCAFVF). At 175 to 214 (KQWRSLQFVGMPENFRPFGRHRHKHGHHAGDADDAIPTHP) the chain is on the extracellular side. Residues 194–214 (RHRHKHGHHAGDADDAIPTHP) are disordered.

This sequence belongs to the Casparian strip membrane proteins (CASP) family. Homodimer and heterodimers.

It is found in the cell membrane. The polypeptide is CASP-like protein 0U1 (Ostreococcus tauri).